We begin with the raw amino-acid sequence, 402 residues long: Protein FAM53A (402 aa).

At Ser119 the chain carries Phosphoserine. Residues 170–215 are disordered; it reads LVPGLPRRPVSPAGPTSPLTPRPASASSGFVDGSEGSTSSGPPWLS. A Nuclear localization signal motif is present at residues 273-281; sequence RRVRRKRRR. Residues Ser306 and Ser309 each carry the phosphoserine modification. Residues 323–333 are compositionally biased toward polar residues; that stretch reads TLVSSPCNSQG. Positions 323–402 are disordered; sequence TLVSSPCNSQ…DLDLEQIENN (80 aa). Low complexity predominate over residues 336-345; sequence GIITPSSSPR.

The protein belongs to the FAM53 family.

Its subcellular location is the nucleus. In terms of biological role, may play an important role in neural development; the dorsomedial roof of the third ventricle. The polypeptide is Protein FAM53A (Mus musculus (Mouse)).